We begin with the raw amino-acid sequence, 187 residues long: UPF0340 protein SP70585_0722 (187 aa).

Belongs to the UPF0340 family.

The protein is UPF0340 protein SP70585_0722 of Streptococcus pneumoniae (strain 70585).